An 840-amino-acid polypeptide reads, in one-letter code: OTU domain-containing protein 7B (840 aa).

Residues alanine 49–aspartate 88 are disordered. Over residues threonine 65–arginine 77 the composition is skewed to basic and acidic residues. Serine 100 is subject to Phosphoserine. Residues glutamate 152–tryptophan 401 form a TRAF-binding region. The tract at residues alanine 167–serine 440 is catalytic. One can recognise an OTU domain in the interval leucine 183–methionine 365. Residues alanine 187–asparagine 193 are regulatory loop. Aspartate 191 is a catalytic residue. The Nucleophile role is filled by cysteine 194. The Proton acceptor role is filled by histidine 358. A compositionally biased stretch (polar residues) spans serine 440–alanine 452. Disordered stretches follow at residues serine 440–glutamate 592 and isoleucine 653–glutamine 710. 2 stretches are compositionally biased toward basic and acidic residues: residues aspartate 456–serine 471 and serine 488–aspartate 500. Serine 464, serine 467, and serine 471 each carry phosphoserine. The short motif at arginine 483–arginine 498 is the Nuclear localization signal element. Gly residues predominate over residues lysine 531 to isoleucine 541. Threonine 730 carries the post-translational modification Phosphothreonine. The A20-type zinc-finger motif lies at proline 793 to glutamate 828. Zn(2+) contacts are provided by cysteine 799, cysteine 804, cysteine 816, and cysteine 819.

The protein belongs to the peptidase C64 family. Interacts with TRAF6. Interacts with PARK7, leading to inhibit deubiquitinase activity. Interacts with EGFR, ITCH and NEDD4. Interacts with TRAF3. Interacts with ZAP70 in activated T cells, but not in resting T cells. Phosphorylated by EGFR.

It is found in the cytoplasm. Its subcellular location is the nucleus. The catalysed reaction is Thiol-dependent hydrolysis of ester, thioester, amide, peptide and isopeptide bonds formed by the C-terminal Gly of ubiquitin (a 76-residue protein attached to proteins as an intracellular targeting signal).. With respect to regulation, deubiquitinase activity is inhibited following interaction with PARK7. Functionally, negative regulator of the non-canonical NF-kappa-B pathway that acts by mediating deubiquitination of TRAF3, an inhibitor of the NF-kappa-B pathway, thereby acting as a negative regulator of B-cell responses. In response to non-canonical NF-kappa-B stimuli, deubiquitinates 'Lys-48'-linked polyubiquitin chains of TRAF3, preventing TRAF3 proteolysis and over-activation of non-canonical NF-kappa-B. Negatively regulates mucosal immunity against infections. Deubiquitinates ZAP70, and thereby regulates T cell receptor (TCR) signaling that leads to the activation of NF-kappa-B. Plays a role in T cell homeostasis and is required for normal T cell responses, including production of IFNG and IL2. Mediates deubiquitination of EGFR. Has deubiquitinating activity toward 'Lys-11', 'Lys-48' and 'Lys-63'-linked polyubiquitin chains. Has a much higher catalytic rate with 'Lys-11'-linked polyubiquitin chains (in vitro); however the physiological significance of these data are unsure. Hydrolyzes both linear and branched forms of polyubiquitin. Acts as a regulator of mTORC1 and mTORC2 assembly by mediating 'Lys-63'-linked deubiquitination of MLST8, thereby promoting assembly of the mTORC2 complex, while inibiting formation of the mTORC1 complex. This Mus musculus (Mouse) protein is OTU domain-containing protein 7B (Otud7b).